A 591-amino-acid chain; its full sequence is NADP-dependent malic enzyme (591 aa).

Basic and acidic residues predominate over residues 1 to 10 (MESTLKEMRD). Residues 1-26 (MESTLKEMRDGASVLDMDPKSTVGGG) form a disordered region. Catalysis depends on Tyr-139, which acts as the Proton donor. Arg-192 is a binding site for NAD(+). Lys-210 functions as the Proton acceptor in the catalytic mechanism. Positions 282, 283, and 306 each coordinate a divalent metal cation. Asp-306 provides a ligand contact to NAD(+). 335–351 (LFLGAGEAGTGIAELIA) serves as a coordination point for NADP(+). Position 447 (Asn-447) interacts with NAD(+).

Belongs to the malic enzymes family. In terms of assembly, homotetramer. Mg(2+) serves as cofactor. Requires Mn(2+) as cofactor. As to expression, mRNA found twofold higher in leaves and stems than in roots.

The protein localises to the cytoplasm. The catalysed reaction is (S)-malate + NADP(+) = pyruvate + CO2 + NADPH. The enzyme catalyses oxaloacetate + H(+) = pyruvate + CO2. This chain is NADP-dependent malic enzyme, found in Populus trichocarpa (Western balsam poplar).